The following is a 428-amino-acid chain: Flotillin-2 (428 aa).

Residue Gly-2 is the site of N-myristoyl glycine attachment. The S-palmitoyl cysteine; by ZDHHC5 moiety is linked to residue Cys-4. Cys-19 carries the S-palmitoyl cysteine lipid modification. Cys-20 carries the S-palmitoyl cysteine; by ZDHHC5 lipid modification. A Phosphoserine modification is found at Ser-405.

This sequence belongs to the band 7/mec-2 family. Flotillin subfamily. As to quaternary structure, heterooligomeric complex of flotillin-1 and flotillin-2 and caveolin-1 and caveolin-2. Interacts with ECPAS. In terms of processing, ZDHHC5-catalyzed palmitoylation may be required for the formation of higher-order complexes and for neurite outgrowth in cultured neural stem cells. In terms of tissue distribution, expressed in many tissues, including suprabasal epidermis, hair follicles, heart, lung, thymus, spleen, liver, kidney and brain. Not expressed in skeletal muscle.

Its subcellular location is the cell membrane. It localises to the membrane. The protein resides in the caveola. The protein localises to the endosome. May act as a scaffolding protein within caveolar membranes, functionally participating in formation of caveolae or caveolae-like vesicles. May be involved in epidermal cell adhesion and epidermal structure and function. The protein is Flotillin-2 (Flot2) of Mus musculus (Mouse).